Here is an 862-residue protein sequence, read N- to C-terminus: Putative PIP5K1A and PSMD4-like protein (862 aa).

Positions 28-396 (TSSALKGAIQ…WFQRFMCNTV (369 aa)) constitute a PIPK domain. Disordered stretches follow at residues 404–424 (PSPSKKLRSGSSFSQRAGSSG) and 453–481 (HLGCPDVLPQTPPLEEISEGSPTPDPSFS). Over residues 412 to 424 (SGSSFSQRAGSSG) the composition is skewed to low complexity. In terms of domain architecture, VWFA spans 490-673 (MLTTSVDNSE…LADALISFPI (184 aa)). The UIM 1 domain maps to 696–715 (SADPELALVLRVFMEEQRQR). The tract at residues 716–740 (QEEEARQAAAASAAEAGIATTGTED) is disordered. Positions 722–731 (QAAAASAAEA) are enriched in low complexity. The region spanning 766-783 (MTEEEKIVCAMQMSLQGA) is the UIM 2 domain. Positions 826-862 (NLPGVDPNNEAIRNAVGSLASQATKDSKKDKKEEDKK) are disordered. Positions 850–862 (KDSKKDKKEEDKK) are enriched in basic and acidic residues.

In terms of tissue distribution, testis-specific.

The protein localises to the cytoplasm. Has negligible PIP5 kinase activity. Binds to ubiquitinated proteins. In Homo sapiens (Human), this protein is Putative PIP5K1A and PSMD4-like protein (PIPSL).